A 206-amino-acid polypeptide reads, in one-letter code: Proteasome subunit beta 1 (206 aa).

Positions 1–5 are cleaved as a propeptide — removed in mature form; by autocatalysis; it reads MLMKG. Threonine 6 acts as the Nucleophile in catalysis.

It belongs to the peptidase T1B family. In terms of assembly, the 20S proteasome core is composed of 14 alpha and 14 beta subunits that assemble into four stacked heptameric rings, resulting in a barrel-shaped structure. The two inner rings, each composed of seven catalytic beta subunits, are sandwiched by two outer rings, each composed of seven alpha subunits. The catalytic chamber with the active sites is on the inside of the barrel. Has a gated structure, the ends of the cylinder being occluded by the N-termini of the alpha-subunits. Is capped at one or both ends by the proteasome regulatory ATPase, PAN.

The protein resides in the cytoplasm. It carries out the reaction Cleavage of peptide bonds with very broad specificity.. Its activity is regulated as follows. The formation of the proteasomal ATPase PAN-20S proteasome complex, via the docking of the C-termini of PAN into the intersubunit pockets in the alpha-rings, triggers opening of the gate for substrate entry. Interconversion between the open-gate and close-gate conformations leads to a dynamic regulation of the 20S proteasome proteolysis activity. Functionally, component of the proteasome core, a large protease complex with broad specificity involved in protein degradation. The sequence is that of Proteasome subunit beta 1 from Korarchaeum cryptofilum (strain OPF8).